Consider the following 500-residue polypeptide: Lysine--tRNA ligase (500 aa).

Mg(2+)-binding residues include Asp412 and Glu419.

This sequence belongs to the class-II aminoacyl-tRNA synthetase family. Homodimer. It depends on Mg(2+) as a cofactor.

The protein localises to the cytoplasm. The catalysed reaction is tRNA(Lys) + L-lysine + ATP = L-lysyl-tRNA(Lys) + AMP + diphosphate. This Kineococcus radiotolerans (strain ATCC BAA-149 / DSM 14245 / SRS30216) protein is Lysine--tRNA ligase.